We begin with the raw amino-acid sequence, 374 residues long: Nuclear hormone receptor family member nhr-57 (374 aa).

Positions 7–84 (RKYCSVCHQL…VGMNPEVVQA (78 aa)) form a DNA-binding region, nuclear receptor. 2 NR C4-type zinc fingers span residues 10–30 (CSVC…CKAC) and 48–67 (CRKK…CKSC). In terms of domain architecture, NR LBD spans 124 to 374 (QMTPTLCGVM…DKIYKIIDGQ (251 aa)).

It belongs to the nuclear hormone receptor family.

The protein localises to the nucleus. Functionally, orphan nuclear receptor. This chain is Nuclear hormone receptor family member nhr-57 (nhr-57), found in Caenorhabditis elegans.